The primary structure comprises 270 residues: Putative phosphoenolpyruvate synthase regulatory protein (270 aa).

Position 150-157 (150-157 (GVSRCGKT)) interacts with ADP.

This sequence belongs to the pyruvate, phosphate/water dikinase regulatory protein family. PSRP subfamily.

The enzyme catalyses [pyruvate, water dikinase] + ADP = [pyruvate, water dikinase]-phosphate + AMP + H(+). It carries out the reaction [pyruvate, water dikinase]-phosphate + phosphate + H(+) = [pyruvate, water dikinase] + diphosphate. Its function is as follows. Bifunctional serine/threonine kinase and phosphorylase involved in the regulation of the phosphoenolpyruvate synthase (PEPS) by catalyzing its phosphorylation/dephosphorylation. The protein is Putative phosphoenolpyruvate synthase regulatory protein of Aeromonas hydrophila subsp. hydrophila (strain ATCC 7966 / DSM 30187 / BCRC 13018 / CCUG 14551 / JCM 1027 / KCTC 2358 / NCIMB 9240 / NCTC 8049).